The chain runs to 92 residues: Putative membrane protein insertion efficiency factor (92 aa).

The protein belongs to the UPF0161 family.

The protein resides in the cell inner membrane. In terms of biological role, could be involved in insertion of integral membrane proteins into the membrane. The protein is Putative membrane protein insertion efficiency factor of Synechococcus sp. (strain CC9902).